A 172-amino-acid chain; its full sequence is Small ribosomal subunit protein uS5 (172 aa).

Residues 17–80 enclose the S5 DRBM domain; the sequence is LREKMISVNR…DEARRKMVKV (64 aa).

The protein belongs to the universal ribosomal protein uS5 family. In terms of assembly, part of the 30S ribosomal subunit. Contacts proteins S4 and S8.

In terms of biological role, with S4 and S12 plays an important role in translational accuracy. Functionally, located at the back of the 30S subunit body where it stabilizes the conformation of the head with respect to the body. This chain is Small ribosomal subunit protein uS5, found in Cupriavidus pinatubonensis (strain JMP 134 / LMG 1197) (Cupriavidus necator (strain JMP 134)).